Reading from the N-terminus, the 293-residue chain is Nitrogenase iron protein (293 aa).

10–17 is a binding site for ATP; it reads GKGGIGKS. Cysteine 98 contributes to the [4Fe-4S] cluster binding site. At arginine 101 the chain carries ADP-ribosylarginine; by dinitrogenase reductase ADP-ribosyltransferase. Residue cysteine 133 coordinates [4Fe-4S] cluster.

It belongs to the NifH/BchL/ChlL family. In terms of assembly, homodimer. [4Fe-4S] cluster serves as cofactor. The reversible ADP-ribosylation of Arg-101 inactivates the nitrogenase reductase and regulates nitrogenase activity.

The catalysed reaction is N2 + 8 reduced [2Fe-2S]-[ferredoxin] + 16 ATP + 16 H2O = H2 + 8 oxidized [2Fe-2S]-[ferredoxin] + 2 NH4(+) + 16 ADP + 16 phosphate + 6 H(+). In terms of biological role, the key enzymatic reactions in nitrogen fixation are catalyzed by the nitrogenase complex, which has 2 components: the iron protein and the molybdenum-iron protein. This is Nitrogenase iron protein from Stutzerimonas stutzeri (strain A1501) (Pseudomonas stutzeri).